Reading from the N-terminus, the 310-residue chain is Small ribosomal subunit protein uS2 (310 aa).

2 disordered regions span residues 213-240 (EEQA…GGAA) and 271-310 (WDSV…TDWA). Over residues 216–227 (AALARQQEEANA) the composition is skewed to low complexity. Residues 297–310 (VTMQEQAKPSTDWA) are compositionally biased toward polar residues.

It belongs to the universal ribosomal protein uS2 family. Component of the small ribosomal subunit. Mature ribosomes consist of a small (40S) and a large (60S) subunit. The 40S subunit contains about 33 different proteins and 1 molecule of RNA (18S). The 60S subunit contains about 49 different proteins and 3 molecules of RNA (28S, 5.8S and 5S). Interacts with ribosomal protein S21.

Its subcellular location is the cytoplasm. In terms of biological role, required for the assembly and/or stability of the 40S ribosomal subunit. Required for the processing of the 20S rRNA-precursor to mature 18S rRNA in a late step of the maturation of 40S ribosomal subunits. This Nematostella vectensis (Starlet sea anemone) protein is Small ribosomal subunit protein uS2.